Here is a 386-residue protein sequence, read N- to C-terminus: D-galactosamine-6-phosphate deaminase AgaS (386 aa).

SIS domains lie at 59 to 217 and 222 to 366; these read LTPI…CIEM and LTER…PDNP.

The protein belongs to the SIS family. AgaS subfamily.

It is found in the cytoplasm. It catalyses the reaction D-galactosamine 6-phosphate + H2O = D-tagatopyranose 1-phosphate + NH4(+). It carries out the reaction alpha-D-glucosamine 6-phosphate + H2O = beta-D-fructose 6-phosphate + NH4(+). Its function is as follows. Involved in the pathway of N-acetyl-D-galactosamine degradation. Catalyzes the conversion of D-galactosamine 6-phosphate (GalN-6-P) to D-tagatofuranose 6-phosphate (Tag-6-P). It can also catalyze the conversion of D-glucosamine 6-phosphate. This chain is D-galactosamine-6-phosphate deaminase AgaS, found in Shewanella sp. (strain ANA-3).